A 1039-amino-acid polypeptide reads, in one-letter code: MSLLMAHRKSKSSQRKLRNRSSSLTPQKRRIRASKGSHDTILSIRNETSSLEALSRTIQWTLARYKYHRYLVSLSPRTPSQLPDYVLAANDSLENAMKWQIASISAVGGKIASHNKNTYTSIDQITDYSASLERANAEIRTCMWSFSSASQALFSLARTKGLDAQRRWMQGSLYVANPSISNIILYSKGIASEGDRHPSDVLEVLNRFIFSKFADEELNLLLYYLTFNPLLNVEVASKLSPLLLYFPVVDQYEFLANLFTSDQSLSKPDVLPFGRDFVEILSSTGDWRASPKAALAERVEPSRFTIPLLNRWCGYLLDSIGILDGVSSAPDREFDIALANEFFHQPQSPRAYLASSIFAMKSAQTLADVKSALYKREIANVHFEKVEQQIAPPDQRFIDYSFAAVAAEVGISESVYENRELFRIACICGISEGRTLDTLILLCEYTNADPFGSSYFPADLFSASVTEDEVARIGHDPRVAIGLSRVAASLGDEGQNLVYIAVEQHLNVRGMSKPSEIVADSAVDVAFLREACTSSSLRQSLEFLSKAEMEDERIQVLFNLAQVDPANEDDYIEEVHTIIGQQTIEELLQRFHVGKVQCDEQALSTWALIELSPKFNRLKDFIDAGLPPVEKDADIQFIAHLTSGKSETFTFKVPNNESLDIARTILAELNSKYALDPRYGVDSYLSLGMRHGAVEAHLQSPLSAENILTAKEPLGYPDDCFWTRYFIDNGFECYGEKIGPVLATFSEKFDNKLEAIKNDLLQVRRPDKPEGLIVADWSEASVLSACARFAEVPDFEAFIAEFTLIFWANVEGNLAAAREFIENVLSNELNELLDELEANVRQATGQQRLAPFSDALMRARQELGNAVNDVSTWHNVARSTDVEPLGLVEIISAAQKIVCRLYPDFEPRVTFSGDTGITVTYSLHILIEVFKALFTNVYAHSEVENPAVDVHMAMTVEDALDVEFVSDCNDMGKAERAALDANEKIRTGEYEKKLPKEGGSGLAKVARSTLRDGKPNTVISVDHSTCKFHVKMAFKIIQI.

Over residues 1–19 (MSLLMAHRKSKSSQRKLRN) the composition is skewed to basic residues. The disordered stretch occupies residues 1 to 38 (MSLLMAHRKSKSSQRKLRNRSSSLTPQKRRIRASKGSH).

This is an uncharacterized protein from Sinorhizobium fredii (strain NBRC 101917 / NGR234).